An 825-amino-acid polypeptide reads, in one-letter code: Endoglucanase C (825 aa).

The signal sequence occupies residues 1 to 28 (MRNKLRRLLAIMMAVLLITSLFAPMVSA). The active-site Proton donor is Glu-219. Glu-335 acts as the Nucleophile in catalysis. Positions 607-621 (DRESVPEPVEHDTKG) are enriched in basic and acidic residues. Residues 607–635 (DRESVPEPVEHDTKGDSALPSDFEDGTRQ) form a disordered region.

It belongs to the glycosyl hydrolase 5 (cellulase A) family.

The enzyme catalyses Endohydrolysis of (1-&gt;4)-beta-D-glucosidic linkages in cellulose, lichenin and cereal beta-D-glucans.. The chain is Endoglucanase C (celC) from Evansella cellulosilytica (strain ATCC 21833 / DSM 2522 / FERM P-1141 / JCM 9156 / N-4) (Bacillus cellulosilyticus).